The primary structure comprises 919 residues: Glutamate receptor ionotropic, kainate 3 (919 aa).

The first 31 residues, 1 to 31 (MTAPWRRLRSLVWEYWAGLLVCAFWIPDSRG), serve as a signal peptide directing secretion. Residues 32–563 (MPHVIRIGGI…VFSFLNPLSP (532 aa)) lie on the Extracellular side of the membrane. N-linked (GlcNAc...) asparagine glycans are attached at residues Asn-70, Asn-76, Asn-278, Asn-381, Asn-415, Asn-426, and Asn-433. The cysteines at positions 99 and 350 are disulfide-linked. 3 residues coordinate L-glutamate: Pro-518, Thr-520, and Arg-525. 2 N-linked (GlcNAc...) asparagine glycosylation sites follow: Asn-548 and Asn-551. The helical transmembrane segment at 564–584 (DIWMYVLLAYLGVSCVLFVIA) threads the bilayer. The Cytoplasmic portion of the chain corresponds to 585–636 (RFSPYEWYDAHPCNPGSEVVENNFTLLNSFWFGMGSLMQQGSELMPKALSTR). Residues 637-657 (IIGGIWWFFTLIIISSYTANL) traverse the membrane as a helical segment. Over 658 to 820 (AAFLTVERME…KEASALGIQK (163 aa)) the chain is Extracellular. Positions 691, 692, and 739 each coordinate L-glutamate. A glycan (N-linked (GlcNAc...) asparagine) is linked at Asn-752. Residues 821–841 (IGGIFIVLAAGLVLSVLVAVG) traverse the membrane as a helical segment. The Cytoplasmic segment spans residues 842–919 (EFVYKLRKTA…CSTSLAPVFP (78 aa)). Ser-869 is subject to Phosphoserine. Lys-887 is covalently cross-linked (Glycyl lysine isopeptide (Lys-Gly) (interchain with G-Cter in SUMO1)).

It belongs to the glutamate-gated ion channel (TC 1.A.10.1) family. GRIK3 subfamily. Homotetramer, and heterotetramer with either GRIK4 or GRIK5. Can form functional heteromeric receptors with GRIK2. Interacts with PRKCABP. Interacts with NETO2.

The protein resides in the cell membrane. The protein localises to the postsynaptic cell membrane. The enzyme catalyses Ca(2+)(in) = Ca(2+)(out). Ionotropic glutamate receptor that functions as a cation-permeable ligand-gated ion channel, gated by L-glutamate and the glutamatergic agonist kainic acid. Binding of the excitatory neurotransmitter L-glutamate induces a conformation change, leading to the opening of the cation channel, and thereby converts the chemical signal to an electrical impulse. The receptor then desensitizes rapidly and enters a transient inactive state, characterized by the presence of bound agonist. In association with GRIK2, involved in presynaptic facilitation of glutamate release at hippocampal mossy fiber synapses. In Homo sapiens (Human), this protein is Glutamate receptor ionotropic, kainate 3 (GRIK3).